Consider the following 319-residue polypeptide: Acetyl-coenzyme A carboxylase carboxyl transferase subunit alpha (319 aa).

Residues 35 to 296 form the CoA carboxyltransferase C-terminal domain; sequence NIDEEVHRLR…KAQLLEDLAD (262 aa).

Belongs to the AccA family. As to quaternary structure, acetyl-CoA carboxylase is a heterohexamer composed of biotin carboxyl carrier protein (AccB), biotin carboxylase (AccC) and two subunits each of ACCase subunit alpha (AccA) and ACCase subunit beta (AccD).

Its subcellular location is the cytoplasm. It catalyses the reaction N(6)-carboxybiotinyl-L-lysyl-[protein] + acetyl-CoA = N(6)-biotinyl-L-lysyl-[protein] + malonyl-CoA. Its pathway is lipid metabolism; malonyl-CoA biosynthesis; malonyl-CoA from acetyl-CoA: step 1/1. Functionally, component of the acetyl coenzyme A carboxylase (ACC) complex. First, biotin carboxylase catalyzes the carboxylation of biotin on its carrier protein (BCCP) and then the CO(2) group is transferred by the carboxyltransferase to acetyl-CoA to form malonyl-CoA. The sequence is that of Acetyl-coenzyme A carboxylase carboxyl transferase subunit alpha from Salmonella paratyphi C (strain RKS4594).